A 198-amino-acid polypeptide reads, in one-letter code: 3-isopropylmalate dehydratase small subunit (198 aa).

The protein belongs to the LeuD family. LeuD type 1 subfamily. As to quaternary structure, heterodimer of LeuC and LeuD.

The catalysed reaction is (2R,3S)-3-isopropylmalate = (2S)-2-isopropylmalate. It participates in amino-acid biosynthesis; L-leucine biosynthesis; L-leucine from 3-methyl-2-oxobutanoate: step 2/4. Its function is as follows. Catalyzes the isomerization between 2-isopropylmalate and 3-isopropylmalate, via the formation of 2-isopropylmaleate. This chain is 3-isopropylmalate dehydratase small subunit, found in Mycobacterium leprae (strain Br4923).